Consider the following 335-residue polypeptide: Acetyl-coenzyme A carboxylase carboxyl transferase subunit alpha (335 aa).

One can recognise a CoA carboxyltransferase C-terminal domain in the interval 40 to 294 (QLETLAARRR…KEAIEKHLNA (255 aa)).

This sequence belongs to the AccA family. Acetyl-CoA carboxylase is a heterohexamer composed of biotin carboxyl carrier protein (AccB), biotin carboxylase (AccC) and two subunits each of ACCase subunit alpha (AccA) and ACCase subunit beta (AccD).

Its subcellular location is the cytoplasm. The enzyme catalyses N(6)-carboxybiotinyl-L-lysyl-[protein] + acetyl-CoA = N(6)-biotinyl-L-lysyl-[protein] + malonyl-CoA. It participates in lipid metabolism; malonyl-CoA biosynthesis; malonyl-CoA from acetyl-CoA: step 1/1. Functionally, component of the acetyl coenzyme A carboxylase (ACC) complex. First, biotin carboxylase catalyzes the carboxylation of biotin on its carrier protein (BCCP) and then the CO(2) group is transferred by the carboxyltransferase to acetyl-CoA to form malonyl-CoA. The sequence is that of Acetyl-coenzyme A carboxylase carboxyl transferase subunit alpha from Prochlorococcus marinus (strain MIT 9301).